The following is a 293-amino-acid chain: ATP synthase gamma chain (293 aa).

Belongs to the ATPase gamma chain family. In terms of assembly, F-type ATPases have 2 components, CF(1) - the catalytic core - and CF(0) - the membrane proton channel. CF(1) has five subunits: alpha(3), beta(3), gamma(1), delta(1), epsilon(1). CF(0) has three main subunits: a, b and c.

The protein localises to the cell inner membrane. In terms of biological role, produces ATP from ADP in the presence of a proton gradient across the membrane. The gamma chain is believed to be important in regulating ATPase activity and the flow of protons through the CF(0) complex. The chain is ATP synthase gamma chain from Sinorhizobium fredii (strain NBRC 101917 / NGR234).